We begin with the raw amino-acid sequence, 66 residues long: Large ribosomal subunit protein bL35 (66 aa).

Composition is skewed to basic residues over residues 1-15 (MPKL…KRFK) and 24-40 (HAQR…TKKQ). The disordered stretch occupies residues 1 to 40 (MPKLKTKSGAKKRFKVTGTGKVMHAQRGKRHGMIKRTKKQ).

Belongs to the bacterial ribosomal protein bL35 family.

This Bradyrhizobium sp. (strain ORS 278) protein is Large ribosomal subunit protein bL35.